A 142-amino-acid chain; its full sequence is U1 small nuclear ribonucleoprotein C (142 aa).

The Matrin-type zinc finger occupies 4-36 (YYCDYCDTFLTHDSPSVRKTHNGGRKHKDNVRM).

This sequence belongs to the U1 small nuclear ribonucleoprotein C family. In terms of assembly, U1 snRNP is composed of the 7 core Sm proteins B/B', D1, D2, D3, E, F and G that assemble in a heptameric protein ring on the Sm site of the small nuclear RNA to form the core snRNP, and at least 3 U1 snRNP-specific proteins U1-70K, U1-A and U1-C. U1-C interacts with U1 snRNA and the 5' splice-site region of the pre-mRNA.

It is found in the nucleus. Its function is as follows. Component of the spliceosomal U1 snRNP, which is essential for recognition of the pre-mRNA 5' splice-site and the subsequent assembly of the spliceosome. U1-C is directly involved in initial 5' splice-site recognition for both constitutive and regulated alternative splicing. The interaction with the 5' splice-site seems to precede base-pairing between the pre-mRNA and the U1 snRNA. Stimulates commitment or early (E) complex formation by stabilizing the base pairing of the 5' end of the U1 snRNA and the 5' splice-site region. The sequence is that of U1 small nuclear ribonucleoprotein C from Caenorhabditis elegans.